Consider the following 92-residue polypeptide: Large ribosomal subunit protein bL27 (92 aa).

The interval 1 to 21 is disordered; that stretch reads MSKKKGVGSSRNGRDSESKRL. The segment covering 12–21 has biased composition (basic and acidic residues); the sequence is NGRDSESKRL.

The protein belongs to the bacterial ribosomal protein bL27 family.

The sequence is that of Large ribosomal subunit protein bL27 from Halothermothrix orenii (strain H 168 / OCM 544 / DSM 9562).